Here is a 488-residue protein sequence, read N- to C-terminus: GTPase Der (488 aa).

EngA-type G domains are found at residues 3–166 and 199–372; these read PVVA…AEAM and IKLA…DSAT. GTP-binding positions include 9 to 16, 56 to 60, 118 to 121, 205 to 212, 252 to 256, and 317 to 320; these read GRPNVGKS, DTGGI, NKID, GKPNVGKS, DTAGV, and NKWD. The region spanning 373–457 is the KH-like domain; that stretch reads RRVSTSMLTR…PIQLRFQEGD (85 aa).

Belongs to the TRAFAC class TrmE-Era-EngA-EngB-Septin-like GTPase superfamily. EngA (Der) GTPase family. Associates with the 50S ribosomal subunit.

Functionally, GTPase that plays an essential role in the late steps of ribosome biogenesis. The chain is GTPase Der from Shewanella sp. (strain ANA-3).